A 254-amino-acid chain; its full sequence is uncharacterized protein (254 aa).

Positions 14–81 (IRLQKVLSQA…DSLVYLALNK (68 aa)) constitute an S4 RNA-binding domain. Aspartate 119 acts as the Nucleophile in catalysis.

Belongs to the pseudouridine synthase RsuA family.

It catalyses the reaction a uridine in RNA = a pseudouridine in RNA. This is an uncharacterized protein from Mycobacterium bovis (strain ATCC BAA-935 / AF2122/97).